Here is a 260-residue protein sequence, read N- to C-terminus: 4-hydroxy-tetrahydrodipicolinate reductase (260 aa).

Position 12–17 (12–17) interacts with NAD(+); it reads GFRGKM. Lys-40 contacts NADP(+). NAD(+) is bound by residues 92–94 and 118–121; these read GTT and APNF. His-148 acts as the Proton donor/acceptor in catalysis. Residue His-149 participates in (S)-2,3,4,5-tetrahydrodipicolinate binding. The Proton donor role is filled by Lys-152. 158-159 is a (S)-2,3,4,5-tetrahydrodipicolinate binding site; that stretch reads GT.

This sequence belongs to the DapB family.

It localises to the cytoplasm. It carries out the reaction (S)-2,3,4,5-tetrahydrodipicolinate + NAD(+) + H2O = (2S,4S)-4-hydroxy-2,3,4,5-tetrahydrodipicolinate + NADH + H(+). The enzyme catalyses (S)-2,3,4,5-tetrahydrodipicolinate + NADP(+) + H2O = (2S,4S)-4-hydroxy-2,3,4,5-tetrahydrodipicolinate + NADPH + H(+). Its pathway is amino-acid biosynthesis; L-lysine biosynthesis via DAP pathway; (S)-tetrahydrodipicolinate from L-aspartate: step 4/4. Its function is as follows. Catalyzes the conversion of 4-hydroxy-tetrahydrodipicolinate (HTPA) to tetrahydrodipicolinate. The protein is 4-hydroxy-tetrahydrodipicolinate reductase of Lactococcus lactis subsp. lactis (strain IL1403) (Streptococcus lactis).